Here is a 493-residue protein sequence, read N- to C-terminus: Amphoterin-induced protein 1 (493 aa).

A signal peptide spans 1-27; the sequence is MHPHRDPRGLWLLLPSLSLLLFEVARA. In terms of domain architecture, LRRNT spans 28–61; that stretch reads GRAVVSCPAACLCASNILSCSKQQLPNVPHSLPS. The Extracellular portion of the chain corresponds to 28–372; sequence GRAVVSCPAA…LHGHHDTLNT (345 aa). 2 disulfides stabilise this stretch: Cys34-Cys40 and Cys38-Cys47. 6 LRR repeats span residues 62–83, 87–108, 111–132, 135–156, 159–179, and 186–206; these read YTAL…WTPT, QLHS…AFSP, NLRY…LFSD, VLEV…AFDD, QLQK…ELVK, and KLTL…PDLQ. An N-linked (GlcNAc...) asparagine glycan is attached at Asn72. The region spanning 221–272 is the LRRCT domain; it reads NPLNCDCELYQLFSHWQYRQLSSVMDFQEDLYCMNSKKLHNVFNLSFLNCGE. 3 disulfide bridges follow: Cys225–Cys253, Cys227–Cys270, and Cys290–Cys341. Residues Asn264, Asn315, Asn349, and Asn360 are each glycosylated (N-linked (GlcNAc...) asparagine). Residues 269 to 353 form the Ig-like C2-type domain; the sequence is NCGEYKERAW…MGETFNETLS (85 aa). A helical transmembrane segment spans residues 373-393; the sequence is AYTTLVGCILSVVLVLIYLYL. Residues 394-493 are Cytoplasmic-facing; that stretch reads TPCRCWCRGV…SVFSDTPIVV (100 aa). Residues 405-493 form a disordered region; the sequence is KPSSHQGDSL…SVFSDTPIVV (89 aa). The span at 408–424 shows a compositional bias: polar residues; the sequence is SHQGDSLSSSMLSTTPN. Over residues 431–442 the composition is skewed to basic and acidic residues; that stretch reads GDKDDGFDRRVA. Phosphoserine occurs at positions 477 and 481.

It belongs to the immunoglobulin superfamily. AMIGO family. Homodimer, and heterodimer with AMIGO2 and AMIGO3. Interacts with KCNB1.

The protein localises to the cell membrane. The protein resides in the perikaryon. It is found in the cell projection. It localises to the dendrite. Its subcellular location is the axon. Promotes growth and fasciculation of neurites from cultured hippocampal neurons. May be involved in fasciculation as well as myelination of developing neural axons. May have a role in regeneration as well as neural plasticity in the adult nervous system. May mediate homophilic as well as heterophilic cell-cell interaction and contribute to signal transduction through its intracellular domain. Assembled with KCNB1 modulates the gating characteristics of the delayed rectifier voltage-dependent potassium channel KCNB1. The protein is Amphoterin-induced protein 1 of Homo sapiens (Human).